The chain runs to 964 residues: Translation initiation factor IF-2 (964 aa).

Residues 105–119 are compositionally biased toward low complexity; that stretch reads AALAESEASEAAPVV. Disordered regions lie at residues 105 to 133 and 146 to 378; these read AALA…EHRR and KARQ…PTEP. Basic and acidic residues-rich tracts occupy residues 123 to 133, 146 to 183, 197 to 253, and 266 to 278; these read EVARREEEHRR, KARQ…KAEE, EAPR…RAIR, and PAER…KKAE. Low complexity predominate over residues 288–302; it reads KPAGEARPAAAKKPA. Residues 303 to 313 are compositionally biased toward pro residues; the sequence is APAPAAAPAPG. Residues 464–633 form the tr-type G domain; that stretch reads TRPPVVTVMG…LLQAEVLELK (170 aa). The interval 473–480 is G1; sequence GHVDHGKT. 473 to 480 lines the GTP pocket; sequence GHVDHGKT. The tract at residues 498 to 502 is G2; the sequence is GITQH. The interval 519–522 is G3; sequence DTPG. Residues 519–523 and 573–576 each bind GTP; these read DTPGH and TKVD. The segment at 573–576 is G4; it reads TKVD. The G5 stretch occupies residues 609–611; the sequence is SAK.

The protein belongs to the TRAFAC class translation factor GTPase superfamily. Classic translation factor GTPase family. IF-2 subfamily.

It is found in the cytoplasm. One of the essential components for the initiation of protein synthesis. Protects formylmethionyl-tRNA from spontaneous hydrolysis and promotes its binding to the 30S ribosomal subunits. Also involved in the hydrolysis of GTP during the formation of the 70S ribosomal complex. The polypeptide is Translation initiation factor IF-2 (Ralstonia pickettii (strain 12J)).